The chain runs to 85 residues: U4-theraphotoxin-Hhn1u (85 aa).

The N-terminal stretch at 1–22 is a signal peptide; it reads MKMTLIAILTCAAVLVLHTTAA. A propeptide spanning residues 23–48 is cleaved from the precursor; it reads EELEAESQLMEVGMPDTELEAVDEER. 3 disulfide bridges follow: Cys52–Cys66, Cys56–Cys77, and Cys71–Cys82.

The protein belongs to the neurotoxin 12 (Hwtx-2) family. 02 (Hwtx-2) subfamily. Expressed by the venom gland.

Its subcellular location is the secreted. Functionally, postsynaptic neurotoxin. This chain is U4-theraphotoxin-Hhn1u, found in Cyriopagopus hainanus (Chinese bird spider).